Here is a 432-residue protein sequence, read N- to C-terminus: Transcriptional adapter 3 (432 aa).

The stretch at 40–69 forms a coiled coil; sequence IEELDTLQLELETLLSSASRRLRVLEAETQ. 2 disordered regions span residues 88 to 127 and 275 to 313; these read KEHE…RNMQ and SPVE…HTKS. Residues 293-305 are compositionally biased toward polar residues; it reads DGASTSPRSQNKP. Residues 367-407 adopt a coiled-coil conformation; it reads LLRLAKEEMNRQELRQRVRMADNEVMDAFRKIMAARQKKRT.

Belongs to the NGG1 family.

The protein resides in the nucleus. Functions as a component of the PCAF complex. The PCAF complex is capable of efficiently acetylating histones in a nucleosomal context. The sequence is that of Transcriptional adapter 3 (tada3) from Xenopus tropicalis (Western clawed frog).